Reading from the N-terminus, the 356-residue chain is Phospho-N-acetylmuramoyl-pentapeptide-transferase (356 aa).

10 helical membrane passes run 25-45 (TVAA…SIIA), 70-90 (GTPT…AFLW), 93-113 (LSNI…MIGF), 138-158 (FLIA…GLAL), 164-184 (YFIN…VGTG), 195-215 (GLAI…AYLS), 235-255 (LAVL…FNAP), 258-278 (AIFM…IVAV), 284-304 (IVLA…VIQV), and 333-353 (QVVI…LSTL).

This sequence belongs to the glycosyltransferase 4 family. MraY subfamily. It depends on Mg(2+) as a cofactor.

It is found in the cell inner membrane. The catalysed reaction is UDP-N-acetyl-alpha-D-muramoyl-L-alanyl-gamma-D-glutamyl-meso-2,6-diaminopimeloyl-D-alanyl-D-alanine + di-trans,octa-cis-undecaprenyl phosphate = di-trans,octa-cis-undecaprenyl diphospho-N-acetyl-alpha-D-muramoyl-L-alanyl-D-glutamyl-meso-2,6-diaminopimeloyl-D-alanyl-D-alanine + UMP. It functions in the pathway cell wall biogenesis; peptidoglycan biosynthesis. In terms of biological role, catalyzes the initial step of the lipid cycle reactions in the biosynthesis of the cell wall peptidoglycan: transfers peptidoglycan precursor phospho-MurNAc-pentapeptide from UDP-MurNAc-pentapeptide onto the lipid carrier undecaprenyl phosphate, yielding undecaprenyl-pyrophosphoryl-MurNAc-pentapeptide, known as lipid I. The sequence is that of Phospho-N-acetylmuramoyl-pentapeptide-transferase from Bartonella quintana (strain Toulouse) (Rochalimaea quintana).